The primary structure comprises 353 residues: Quinolinate synthase (353 aa).

H47 and S68 together coordinate iminosuccinate. Residue C113 participates in [4Fe-4S] cluster binding. Residues 139–141 (YAN) and S156 contribute to the iminosuccinate site. C200 is a [4Fe-4S] cluster binding site. Iminosuccinate is bound by residues 226–228 (HPE) and T243. C297 is a binding site for [4Fe-4S] cluster.

It belongs to the quinolinate synthase family. Type 1 subfamily. [4Fe-4S] cluster serves as cofactor.

The protein resides in the cytoplasm. It catalyses the reaction iminosuccinate + dihydroxyacetone phosphate = quinolinate + phosphate + 2 H2O + H(+). It functions in the pathway cofactor biosynthesis; NAD(+) biosynthesis; quinolinate from iminoaspartate: step 1/1. Catalyzes the condensation of iminoaspartate with dihydroxyacetone phosphate to form quinolinate. This Pectobacterium carotovorum subsp. carotovorum (strain PC1) protein is Quinolinate synthase.